Consider the following 425-residue polypeptide: tRNA(Met) cytidine acetate ligase (425 aa).

ATP-binding positions include 7 to 20 (VVEY…HLHH), Gly-102, Asn-162, and 187 to 188 (RI).

Belongs to the TmcAL family.

It is found in the cytoplasm. It catalyses the reaction cytidine(34) in elongator tRNA(Met) + acetate + ATP = N(4)-acetylcytidine(34) in elongator tRNA(Met) + AMP + diphosphate. Functionally, catalyzes the formation of N(4)-acetylcytidine (ac(4)C) at the wobble position of elongator tRNA(Met), using acetate and ATP as substrates. First activates an acetate ion to form acetyladenylate (Ac-AMP) and then transfers the acetyl group to tRNA to form ac(4)C34. The chain is tRNA(Met) cytidine acetate ligase from Fervidobacterium nodosum (strain ATCC 35602 / DSM 5306 / Rt17-B1).